Reading from the N-terminus, the 63-residue chain is Metallothionein (63 aa).

Residues 1–30 (MDPQDCTCAAGDSCSCAGSCKCKNCRCRSC) are beta. Residues Cys-6, Cys-8, Cys-14, Cys-16, Cys-20, Cys-22, Cys-25, Cys-27, Cys-30, Cys-34, Cys-35, Cys-37, Cys-38, Cys-42, Cys-45, Cys-49, Cys-51, Cys-59, Cys-61, and Cys-62 each contribute to the a divalent metal cation site. The segment at 31 to 63 (RKSCCSCCPAGCNNCAKGCVCKEPASSKCSCCH) is alpha.

It belongs to the metallothionein superfamily. Type 1 family.

Metallothioneins have a high content of cysteine residues that bind various heavy metals. This Anas platyrhynchos (Mallard) protein is Metallothionein.